The following is a 442-amino-acid chain: UDP-N-acetylmuramate--L-alanine ligase (442 aa).

Position 109–115 (109–115) interacts with ATP; that stretch reads GAHGKTS.

It belongs to the MurCDEF family.

It localises to the cytoplasm. The enzyme catalyses UDP-N-acetyl-alpha-D-muramate + L-alanine + ATP = UDP-N-acetyl-alpha-D-muramoyl-L-alanine + ADP + phosphate + H(+). It participates in cell wall biogenesis; peptidoglycan biosynthesis. In terms of biological role, cell wall formation. This chain is UDP-N-acetylmuramate--L-alanine ligase, found in Streptococcus pyogenes serotype M28 (strain MGAS6180).